Reading from the N-terminus, the 395-residue chain is Ketol-acid reductoisomerase, mitochondrial (395 aa).

Residues 1–47 (MLRTQAARLICNSRVITAKRTFALATRAAAYSRPAARFVKPMITTRG) constitute a mitochondrion transit peptide. Residues 57 to 246 (VETVYERADW…AIGSGYVYQT (190 aa)) form the KARI N-terminal Rossmann domain. Residues 84–93 (GYGSQGYGQG), 108–113 (RKDGAS), and 146–150 (SDAAQ) contribute to the NADP(+) site. H171 is an active-site residue. The KARI C-terminal knotted domain occupies 247–394 (TFEREVNSDL…KEVRKLRPEN (148 aa)). D255, E259, E291, and E295 together coordinate Mg(2+). Position 317 (S317) interacts with substrate. S355 bears the Phosphoserine mark. A hydrophilic region spans residues 363 to 395 (DYREKLEKELDTIRNMEIWKVGKEVRKLRPENQ).

This sequence belongs to the ketol-acid reductoisomerase family. It depends on Mg(2+) as a cofactor.

It localises to the mitochondrion. It catalyses the reaction (2R)-2,3-dihydroxy-3-methylbutanoate + NADP(+) = (2S)-2-acetolactate + NADPH + H(+). It carries out the reaction (2R,3R)-2,3-dihydroxy-3-methylpentanoate + NADP(+) = (S)-2-ethyl-2-hydroxy-3-oxobutanoate + NADPH + H(+). It functions in the pathway amino-acid biosynthesis; L-isoleucine biosynthesis; L-isoleucine from 2-oxobutanoate: step 2/4. The protein operates within amino-acid biosynthesis; L-valine biosynthesis; L-valine from pyruvate: step 2/4. In terms of biological role, involved in the biosynthesis of branched-chain amino acids (BCAA). Catalyzes the second common step in the parallel biosynthesis of isoleucine and valine. Converts alpha-aceto-alpha-hydroxybutyrate (AHB) to alpha,beta-dihydroxy-beta-methylvalerate (DHMV) and alpha-acetolactate (AL) to alpha,beta-dihydroxy-isovalerate (DHV) in isoleucine and valine biosynthesis, respectively. This chain is Ketol-acid reductoisomerase, mitochondrial, found in Saccharomyces cerevisiae (strain ATCC 204508 / S288c) (Baker's yeast).